The following is a 198-amino-acid chain: N-acetyltransferase 9-like protein (198 aa).

The N-acetyltransferase domain maps to 14–186 (IILVPYKEKH…SNNFTNLTAD (173 aa)).

This sequence belongs to the acetyltransferase family. GNAT subfamily.

The chain is N-acetyltransferase 9-like protein (nat9) from Nematostella vectensis (Starlet sea anemone).